The sequence spans 1075 residues: MQPPPRKGNYVKFLKNLHTEQVAKLQLKNQHECDLLEDIRQFTIKRSAVEKSYSESLLKISSQYLNKKIPNIPDIKMEGMEERWNMWSVWRTVLEENEKLARARLAAIEVFQQQIADEAKVLRDYKLAIAKRSLAGIVNVQKELHLSVGDVDKTKKSYFDEEHCAHDVRDKARDIEEKLKKKKGSFFQSITSLQKNSARVTSRKELLEEKSSGARNDYVLSLAAANAHQNRYFTVDLQTTMTTMENYVFERVAEYLMLMGRTELLTCSATQNSFGKIRDQAQQLTREYNLQCCYLFYPVLKQHIQYDFEACDNDPVRKVTAEHESAAETLTKEAKNLAGRVVKENASIRENAKKLALCQSLRDSGQRTDPNDPNGPDLDTKIEEFRDQIRRSETEKTKAEACLQCLRDGGINVDEWVQEAENMGVQELTRSASSISMRTDASGQGENPSSDSFYDSDKEETQAAAQTKPKQEQQLSRDRTFSDSEDEPEVRPSAAAASSAAAASSSMMASSAGGWDDPTEVNWGAGEEEDDKDEPIVPEPKEAIFKCTALYSYTAQNPDELTIVENEQLEVVGEGDGDGWLRARNYRGEEGYVPHNYLDIDQETAGSAFNGTSGNQLRSQISFSSVDYTVDNEDQTVDSMQSPDQVSVIMAPQKRVKSDVEWCIALYDYDATAEDELTFEEGDKIKIITKTAHGVDDGWWEGELDGKFGNFPSLVVEECDEMGEPLSEGGDESPPPTAAPTFALPPAPALPPEYAHELELELTEDMFGSQDTADEDSGYIPNGAAAPSIPPPVLIQEPGMEDDLSDDGQPPPSLPPPQLAKAGGSAPGSGSKVEKGAAAGGANTLNLGMAQIIVTAATPMVEDGADKSFPPVGESDAQPVEPVSKEQPAEVAKKPDIAPKPLAKVAPQSAPAKEGNAGVRPVVSITLTEYPSCDAEDQQSFSEGTDSASVADVPVLQDAEDPFNEKAKGESGDGSGFEANFEANFDANFDDAFAGIGGGGGGGGGGGEQSNELDINGEAAGEAIVSGSAAGDEDIEAPKQVVGGRASIPEELDSNQLAHYHEHEIYYVDYSHGQL.

An F-BAR domain is found at 11 to 289 (VKFLKNLHTE…QAQQLTREYN (279 aa)). Disordered stretches follow at residues 361–381 (LRDS…LDTK) and 431–536 (SASS…DEPI). A compositionally biased stretch (polar residues) spans 431 to 453 (SASSISMRTDASGQGENPSSDSF). The span at 469–482 (PKQEQQLSRDRTFS) shows a compositional bias: basic and acidic residues. A compositionally biased stretch (low complexity) spans 493 to 512 (SAAAASSAAAASSSMMASSA). SH3 domains are found at residues 542–603 (EAIF…IDQE) and 658–721 (SDVE…ECDE). Disordered stretches follow at residues 722–747 (MGEP…LPPA), 769–837 (SQDT…EKGA), and 864–917 (GADK…EGNA). 2 stretches are compositionally biased toward pro residues: residues 733–747 (SPPP…LPPA) and 809–818 (QPPPSLPPPQ). Residues 819 to 837 (LAKAGGSAPGSGSKVEKGA) show a composition bias toward low complexity. Over residues 883–897 (VSKEQPAEVAKKPDI) the composition is skewed to basic and acidic residues.

As to quaternary structure, homodimer. Interacts (via SH3 domain 1) with WASp. Interacts (via SH3 domain 1) with shi/dynamin. Interacts (via SH3 domain 2) with Dap160. Interacts (via F-BAR domain) with SH3PX1. Interacts (via SH3 domain 2) with Snx16. Identified in a complex with Syn and Syt1. As to expression, detected in larval body wall muscle. Detected at the neuromuscular junction, on motoneuron axons and axon terminals, at synaptic boutons in the periactive zone surrounding the synapse (at protein level). Detected on motoneuron axons and axon terminals, at synaptic boutons in the periactive zone surrounding the synapse.

Its subcellular location is the endomembrane system. It is found in the synapse. The protein resides in the cell projection. The protein localises to the axon. It localises to the presynaptic cell membrane. Its subcellular location is the cytoplasmic vesicle. It is found in the secretory vesicle. The protein resides in the synaptic vesicle. The protein localises to the recycling endosome. Functionally, adapter protein that provides a link between vesicular membrane traffic and the actin assembly machinery. Acts together with Cdc42 to stimulate actin nucleation mediated by WASp and the ARP2/3 complex. Binds to membranes enriched in phosphatidylinositol 4,5-bisphosphate and causes local membrane deformation. Required for normal structure and function of synapses at the neuromuscular junction. Plays a role in synaptic vesicle trafficking. Required for the release of a normal number of synaptic vesicles per action potential. The chain is Protein nervous wreck from Drosophila melanogaster (Fruit fly).